The sequence spans 317 residues: Bile salt hydrolase/transferase (317 aa).

Cys-2 serves as the catalytic Nucleophile; acyl-thioester intermediate. Positions 2 and 18 each coordinate deoxycholate. Asn-82 lines the taurine pocket.

The protein belongs to the peptidase C59 family. In terms of assembly, homotetramer. The tetramer consists of a dimer of dimers.

The enzyme catalyses glycocholate + H2O = cholate + glycine. It catalyses the reaction glycodeoxycholate + H2O = deoxycholate + glycine. The catalysed reaction is chenodeoxycholate + glycine = glycochenodeoxycholate + H2O. It carries out the reaction cholate + taurine = taurocholate + H2O. The enzyme catalyses taurodeoxycholate + H2O = deoxycholate + taurine. It catalyses the reaction taurochenodeoxycholate + H2O = chenodeoxycholate + taurine. The catalysed reaction is an L-alpha-amino acid + cholate = an N-choloyl-L-alpha-amino acid + H2O. It carries out the reaction an L-alpha-amino acid + taurocholate = an N-choloyl-L-alpha-amino acid + taurine. The enzyme catalyses cholate + L-alanine = L-alanocholate + H2O. It catalyses the reaction taurocholate + L-alanine = L-alanocholate + taurine. The catalysed reaction is cholate + L-serine = L-serocholate + H2O. It carries out the reaction taurocholate + L-serine = L-serocholate + taurine. The enzyme catalyses cholate + L-histidine = L-histidocholate + H2O. It catalyses the reaction taurocholate + L-histidine = L-histidocholate + taurine. The protein operates within lipid metabolism; bile acid biosynthesis. Hydrolase activity is competitively inhibited by the products cholate (CA) and deoxycholate (DCA), and by phenylacetate and 4-aminophenylacetate. Penicillin V and penicillin G show mixed inhibition. Strongly inhibited by thiol enzyme inhibitors in vitro. In terms of biological role, possesses dual functions in bile acid metabolism. Acts as a bile salt hydrolase that catalyzes the deconjugation of glycine- and taurine-linked bile salts, which occurs naturally in the intestines of humans, releasing amino acid residues and deconjugated bile salts (bile acids). Can hydrolyze the amide bond in all six major human conjugated bile salts, namely glycocholate (GCA), glycodeoxycholate (GDCA), glycochenodeoxycholate (GCDCA), taurocholate (TCA), taurodeoxycholate (TDCA) and taurochenodeoxycholate (TCDCA). Shows a slight preference for glycine-conjugated bile acids as substrates. Also acts as an amine N-acyltransferase that conjugates a wide variety of amino acids to conjugated and non-conjugated bile acids, thus producing bacterial bile acid amidates (BBAAs) - also named microbially conjugated bile acids (MCBAs) - in the gastrointestinal tract. These BBAAs may facilitate communication between the microbiota and host through the activation of human ligand-activated transcription factors. Is totally inactive toward penicillin V. The protein is Bile salt hydrolase/transferase of Bifidobacterium longum.